Reading from the N-terminus, the 119-residue chain is Putative arsenical resistance operon repressor ArsR2 (119 aa).

The HTH arsR-type domain maps to 24–119; sequence VDSDAMATDL…TLDDLRGNHE (96 aa). The H-T-H motif DNA-binding region spans 60 to 83; it reads VCDLEATVGVSQSAVSQALSRLYT.

In terms of biological role, transcriptional repressor for the arsR2M operon. The chain is Putative arsenical resistance operon repressor ArsR2 (arsR2) from Halobacterium salinarum (strain ATCC 700922 / JCM 11081 / NRC-1) (Halobacterium halobium).